We begin with the raw amino-acid sequence, 163 residues long: Nucleotide-binding protein Dde_2479 (163 aa).

This sequence belongs to the YajQ family.

Its function is as follows. Nucleotide-binding protein. The sequence is that of Nucleotide-binding protein Dde_2479 from Oleidesulfovibrio alaskensis (strain ATCC BAA-1058 / DSM 17464 / G20) (Desulfovibrio alaskensis).